The sequence spans 442 residues: GTPase Der (442 aa).

EngA-type G domains are found at residues 2–168 (ATVL…EEAG) and 182–356 (LKVA…EKID). Residues 8-15 (GRPNVGKS), 55-59 (DTCGL), 118-121 (NKVE), 188-195 (GKPNAGKS), 235-239 (DTAGM), and 301-304 (NKSD) contribute to the GTP site. Positions 357–442 (LRIPTGLLNN…PIFIKLRRKK (86 aa)) constitute a KH-like domain.

It belongs to the TRAFAC class TrmE-Era-EngA-EngB-Septin-like GTPase superfamily. EngA (Der) GTPase family. As to quaternary structure, associates with the 50S ribosomal subunit.

Its function is as follows. GTPase that plays an essential role in the late steps of ribosome biogenesis. This is GTPase Der from Kosmotoga olearia (strain ATCC BAA-1733 / DSM 21960 / TBF 19.5.1).